The sequence spans 572 residues: Frizzled-7 (572 aa).

The N-terminal stretch at 1-32 (MRGPGTAASHSPLGLCALVLALLGALPTDTRA) is a signal peptide. Over 33 to 254 (QPYHGEKGIS…EEERRFARLW (222 aa)) the chain is Extracellular. The FZ domain maps to 44-163 (PDHGFCQPIS…HGAGEICVGQ (120 aa)). Cystine bridges form between Cys-49–Cys-110, Cys-57–Cys-103, Cys-94–Cys-131, Cys-120–Cys-160, and Cys-124–Cys-148. Asn-63 is a glycosylation site (N-linked (GlcNAc...) asparagine). Asn-164 is a glycosylation site (N-linked (GlcNAc...) asparagine). A helical transmembrane segment spans residues 255-275 (VGVWSVLCCASTLFTVLTYLV). The Cytoplasmic segment spans residues 276 to 286 (DMRRFSYPERP). The helical transmembrane segment at 287–307 (IIFLSGCYFMVAVAHVAGFLL) threads the bilayer. Topologically, residues 308–334 (EDRAVCVERFSDDGYRTVAQGTKKEGC) are extracellular. Residues 335–355 (TILFMVLYFFGMASSIWWVIL) traverse the membrane as a helical segment. The Cytoplasmic segment spans residues 356-377 (SLTWFLAAGMKWGHEAIEANSQ). The chain crosses the membrane as a helical span at residues 378–398 (YFHLAAWAVPAVKTITILAMG). Residues 399–421 (QVDGDLLSGVCYVGLSSVDALRG) lie on the Extracellular side of the membrane. Residues 422-442 (FVLAPLFVYLFIGTSFLLAGF) traverse the membrane as a helical segment. Over 443 to 468 (VSLFRIRTIMKHDGTKTEKLEKLMVR) the chain is Cytoplasmic. The chain crosses the membrane as a helical span at residues 469–489 (IGVFSVLYTVPATIVLACYFY). The Extracellular portion of the chain corresponds to 490–526 (EQAFREHWERTWLLQTCKSYAVPCPPGHFSPMSPDFT). Residues 527–547 (VFMIKYLMTMIVGITTGFWIW) traverse the membrane as a helical segment. The Cytoplasmic portion of the chain corresponds to 548–572 (SGKTLQSWRRFYHRLSHSSKGETAV). The Lys-Thr-X-X-X-Trp motif, mediates interaction with the PDZ domain of Dvl family members motif lies at 550 to 555 (KTLQSW). A PDZ-binding motif is present at residues 570 to 572 (TAV).

It belongs to the G-protein coupled receptor Fz/Smo family. As to quaternary structure, interacts with MAGI3. Interacts with DVL1. Interacts with CCDC88C/DAPLE; the interaction displaces DVL1 from FZD7, leading to inhibition of canonical Wnt signaling and triggering of non-canonical Wnt responses. Interacts with MYOC. Binds to SDCBP; this interaction is increased by inositol trisphosphate (IP3). Interacts with glypican GPC3. In terms of processing, ubiquitinated by ZNRF3, leading to its degradation by the proteasome.

The protein resides in the cell membrane. It is found in the endosome membrane. Functionally, receptor for Wnt proteins. Most frizzled receptors are coupled to the beta-catenin canonical signaling pathway, which leads to the activation of disheveled proteins, inhibition of GSK-3 kinase, nuclear accumulation of beta-catenin and activation of Wnt target genes. A second signaling pathway involving PKC and calcium fluxes has been seen for some family members, but it is not yet clear if it represents a distinct pathway or if it can be integrated in the canonical pathway, as PKC seems to be required for Wnt-mediated inactivation of GSK-3 kinase. Both pathways seem to involve interactions with G-proteins. Activation by WNT8 induces expression of beta-catenin target genes. Following ligand activation, binds to CCDC88C/DAPLE which displaces DVL1 from FZD7 and leads to inhibition of canonical Wnt signaling, activation of G-proteins by CCDC88C and triggering of non-canonical Wnt responses. May be involved in transduction and intercellular transmission of polarity information during tissue morphogenesis and/or in differentiated tissues. The sequence is that of Frizzled-7 (Fzd7) from Mus musculus (Mouse).